A 138-amino-acid polypeptide reads, in one-letter code: 1,4-dihydroxy-2-naphthoyl-CoA hydrolase (138 aa).

Aspartate 16 is a catalytic residue.

The protein belongs to the 4-hydroxybenzoyl-CoA thioesterase family. DHNA-CoA hydrolase subfamily.

It catalyses the reaction 1,4-dihydroxy-2-naphthoyl-CoA + H2O = 1,4-dihydroxy-2-naphthoate + CoA + H(+). Its pathway is cofactor biosynthesis; phylloquinone biosynthesis. It functions in the pathway quinol/quinone metabolism; 1,4-dihydroxy-2-naphthoate biosynthesis; 1,4-dihydroxy-2-naphthoate from chorismate: step 7/7. Functionally, catalyzes the specific hydrolysis of 1,4-dihydroxy-2-naphthoyl-CoA (DHNA-CoA) to 1,4-dihydroxy-2-naphthoate (DHNA), a reaction involved in phylloquinone (vitamin K1) biosynthesis. Is not active on benzoyl-CoA, phenylacetyl-CoA and aliphatic acyl-CoA thioesters. In Synechocystis sp. (strain ATCC 27184 / PCC 6803 / Kazusa), this protein is 1,4-dihydroxy-2-naphthoyl-CoA hydrolase.